The chain runs to 152 residues: MDNEELQQLVCRISLESFQKPFIHQAYFNGRLRSTGGRYLLQSHNIEINPKAFELYGIKEIQGIVLHELCHYHLHIEGKGYQHRDKEFRELLKKVKAPRFCSALHTSKPSIKKQRRYTYTCVNCQQLYIRKIKMNVEKYCCSKCLGKLELLK.

The SprT-like domain occupies 6-151 (LQQLVCRISL…SKCLGKLELL (146 aa)). His-67 contributes to the Zn(2+) binding site. The active site involves Glu-68. His-71 serves as a coordination point for Zn(2+).

Belongs to the SprT family. Zn(2+) serves as cofactor.

The protein localises to the cytoplasm. The sequence is that of Protein SprT-like from Lysinibacillus sphaericus (strain C3-41).